The sequence spans 153 residues: Regulator of ribonuclease activity B (153 aa).

Positions 114-153 (DPNADDDEYGDDGEFLDDEDEYGDDGEFFDDEDEEEPRVH) are disordered. Positions 115–153 (PNADDDEYGDDGEFLDDEDEYGDDGEFFDDEDEEEPRVH) are enriched in acidic residues.

This sequence belongs to the RraB family. In terms of assembly, interacts with the C-terminal region of Rne.

It is found in the cytoplasm. Its function is as follows. Globally modulates RNA abundance by binding to RNase E (Rne) and regulating its endonucleolytic activity. Can modulate Rne action in a substrate-dependent manner by altering the composition of the degradosome. The protein is Regulator of ribonuclease activity B of Haemophilus influenzae (strain ATCC 51907 / DSM 11121 / KW20 / Rd).